The sequence spans 364 residues: E3 ubiquitin-protein ligase rnf146 (364 aa).

The interval 18 to 37 (KKVSGEAVPEGSGSPSSPSL) is disordered. Positions 22–34 (GEAVPEGSGSPSS) are enriched in low complexity. An RING-type zinc finger spans residues 42-80 (CPICLQSCVHPVRLPCRHIFCFLCVKGASWHSKRCALCR). A WWE domain is found at 102 to 178 (SATGGCGTGS…EHGRRRRMKR (77 aa)). The a glycoprotein site is built by Y118, R121, W125, Y155, Q164, R174, and K186. Disordered stretches follow at residues 217-262 (AAAE…PASS) and 279-364 (NEQE…VTKV). Acidic residues-rich tracts occupy residues 281–295 (QEPEEEDAEDEDDSA) and 308–322 (TSDDDEQVEDEDENE).

The protein resides in the cytoplasm. It is found in the cytosol. Its subcellular location is the nucleus. The enzyme catalyses S-ubiquitinyl-[E2 ubiquitin-conjugating enzyme]-L-cysteine + [acceptor protein]-L-lysine = [E2 ubiquitin-conjugating enzyme]-L-cysteine + N(6)-ubiquitinyl-[acceptor protein]-L-lysine.. The protein operates within protein modification; protein ubiquitination. Its function is as follows. E3 ubiquitin-protein ligase that specifically binds poly-ADP-ribosylated proteins and mediates their ubiquitination and subsequent degradation. May regulate many important biological processes, such as cell survival and DNA damage response. Acts as an activator of the Wnt signaling pathway by mediating the ubiquitination of poly-ADP-ribosylated proteins. Neuroprotective protein. Protects against cell death induced by DNA damaging agents and rescues cells from G1 arrest. Promotes cell survival after gamma-irradiation. Facilitates DNA repair. In Danio rerio (Zebrafish), this protein is E3 ubiquitin-protein ligase rnf146 (rnf146).